A 136-amino-acid polypeptide reads, in one-letter code: Large ribosomal subunit protein uL22 (136 aa).

Belongs to the universal ribosomal protein uL22 family. In terms of assembly, part of the 50S ribosomal subunit.

Functionally, this protein binds specifically to 23S rRNA; its binding is stimulated by other ribosomal proteins, e.g. L4, L17, and L20. It is important during the early stages of 50S assembly. It makes multiple contacts with different domains of the 23S rRNA in the assembled 50S subunit and ribosome. The globular domain of the protein is located near the polypeptide exit tunnel on the outside of the subunit, while an extended beta-hairpin is found that lines the wall of the exit tunnel in the center of the 70S ribosome. The sequence is that of Large ribosomal subunit protein uL22 from Parabacteroides distasonis (strain ATCC 8503 / DSM 20701 / CIP 104284 / JCM 5825 / NCTC 11152).